The following is a 550-amino-acid chain: MLKNINPTHTQAWKDLTAHYEDAQDLQLSDLFANDSERFNKFSATFGSDILLDYSKNLITEETLTKLFALAEQTELKAAIAEMFSGEKINKTEDRAVLHSALRNRSNTPVVVDGEDVMPKVNAVLEKMKAFTARIVDGDWKGYTGQEITDVVNVGIGGSDLGPYMVSEALVPYKTRLNMHFVSNVDGTHIAETLKDLNPETTLFLIASKTFTTQETMTNAHSARDWFLATAQDQAHVAKHFAALSTNVGSVSEFGIDTDNMFEFWDWVGGRYSLCSAIGLSICLSIGFDNFVELLDGAHEMDQHFAQAPLEENLPVILALIGIWYNNFHGAESEAILPYDQYLHRFAAYFQQGNMESNGKCVDRGGNPVDYQTGPIIWGEPGTNGQHAFYQLIHQGTKLIPCDFIAPSISHNPLTDHHPKLMANFFAQTEALAFGKTKEQVEAEFVAAGKTLDEVKDLVPFKVFDGNRPTNSILIKQVTPKVLGSLMALYEQKIFTQGVIWNIFSFDQWGVELGKQLANQILPELNDADSIAGHDSSTNGLINAYKQWRK.

The active-site Proton donor is Glu356. Catalysis depends on residues His387 and Lys515.

This sequence belongs to the GPI family.

Its subcellular location is the cytoplasm. The catalysed reaction is alpha-D-glucose 6-phosphate = beta-D-fructose 6-phosphate. The protein operates within carbohydrate biosynthesis; gluconeogenesis. It functions in the pathway carbohydrate degradation; glycolysis; D-glyceraldehyde 3-phosphate and glycerone phosphate from D-glucose: step 2/4. Catalyzes the reversible isomerization of glucose-6-phosphate to fructose-6-phosphate. The sequence is that of Glucose-6-phosphate isomerase from Photobacterium profundum (strain SS9).